Consider the following 296-residue polypeptide: ATP synthase gamma chain (296 aa).

The protein belongs to the ATPase gamma chain family. F-type ATPases have 2 components, CF(1) - the catalytic core - and CF(0) - the membrane proton channel. CF(1) has five subunits: alpha(3), beta(3), gamma(1), delta(1), epsilon(1). CF(0) has three main subunits: a, b and c.

It is found in the cell inner membrane. Produces ATP from ADP in the presence of a proton gradient across the membrane. The gamma chain is believed to be important in regulating ATPase activity and the flow of protons through the CF(0) complex. This is ATP synthase gamma chain from Jannaschia sp. (strain CCS1).